The primary structure comprises 349 residues: MAIPITVLDCDLLLYGRGHRTLDRFKLDDVTDEYLMSMYGFPRQFIYYLVELLGASLSRPTQRSRAISPETQILAALGFYTSGSFQTRMGDAIGISQASMSRCVANVTEALVERASQFIHFPADEASVQALKDEFYGLAGIPGVIGVVDCMHVAIKAPNAEDLSYVNRKGLHSLNCLMVCDIRGALMTVETSWPGSLQDCVVLQQSSLSSQFEAGMHKESWLLGDSSFFLRTWLMTPLHIPETPAEYRYNMAHSATHSVIEKTFRTLCSRFRCLDGSKGALQYSPEKSSHIILACCVLHNISLEHGMDVWSSPVTGPVEQPPEEEYEHMESLDLEADRIRQELMLTHFS.

The region spanning 148 to 300 (VDCMHVAIKA…IILACCVLHN (153 aa)) is the DDE Tnp4 domain. 4 residues coordinate a divalent metal cation: Asp149, Asp199, Asp225, and Glu261.

This sequence belongs to the HARBI1 family. Interacts with NAIF1. It depends on a divalent metal cation as a cofactor. In terms of tissue distribution, detected in brain.

It localises to the nucleus. Its subcellular location is the cytoplasm. In terms of biological role, transposase-derived protein that may have nuclease activity (Potential). Does not have transposase activity. The sequence is that of Putative nuclease HARBI1 (HARBI1) from Bos taurus (Bovine).